We begin with the raw amino-acid sequence, 225 residues long: Large ribosomal subunit protein bL25 (225 aa).

The segment at 206 to 225 is disordered; it reads EDSKNKITKDNETNKDKSNL.

This sequence belongs to the bacterial ribosomal protein bL25 family. CTC subfamily. As to quaternary structure, part of the 50S ribosomal subunit; part of the 5S rRNA/L5/L18/L25 subcomplex. Contacts the 5S rRNA. Binds to the 5S rRNA independently of L5 and L18.

In terms of biological role, this is one of the proteins that binds to the 5S RNA in the ribosome where it forms part of the central protuberance. The polypeptide is Large ribosomal subunit protein bL25 (Vesicomyosocius okutanii subsp. Calyptogena okutanii (strain HA)).